A 457-amino-acid chain; its full sequence is ATP synthase subunit beta (457 aa).

147-154 (GGAGVGKT) serves as a coordination point for ATP.

Belongs to the ATPase alpha/beta chains family. F-type ATPases have 2 components, CF(1) - the catalytic core - and CF(0) - the membrane proton channel. CF(1) has five subunits: alpha(3), beta(3), gamma(1), delta(1), epsilon(1). CF(0) has three main subunits: a(1), b(2) and c(9-12). The alpha and beta chains form an alternating ring which encloses part of the gamma chain. CF(1) is attached to CF(0) by a central stalk formed by the gamma and epsilon chains, while a peripheral stalk is formed by the delta and b chains.

It is found in the cell inner membrane. It carries out the reaction ATP + H2O + 4 H(+)(in) = ADP + phosphate + 5 H(+)(out). In terms of biological role, produces ATP from ADP in the presence of a proton gradient across the membrane. The catalytic sites are hosted primarily by the beta subunits. In Pasteurella multocida (strain Pm70), this protein is ATP synthase subunit beta.